The sequence spans 319 residues: Annexin A4 (319 aa).

Ala2 bears the N-acetylalanine mark. Residue Thr7 is modified to Phosphothreonine. Residue Ser12 is modified to Phosphoserine. 4 Annexin repeats span residues 14 to 85, 86 to 157, 169 to 241, and 245 to 316; these read FNAA…GMMT, PTVL…SLSA, ALMR…AIVK, and NKSA…ILCG. Lys213, Lys293, and Lys300 each carry N6-acetyllysine.

It belongs to the annexin family. In terms of assembly, monomer. Binds to SFTPA1 in a Ca(2+)-dependent manner.

Its subcellular location is the zymogen granule membrane. May play a role in alveolar type II cells through interaction with the surfactant protein SFTPA1 (SP-A). The polypeptide is Annexin A4 (ANXA4) (Bos taurus (Bovine)).